A 684-amino-acid chain; its full sequence is DNA helicase IV (684 aa).

Positions 195–505 (SPLNPAQARA…CDLDTTYRFN (311 aa)) constitute a UvrD-like helicase ATP-binding domain. Residues 216–223 (AGAGSGKT) and Arg-503 contribute to the ATP site.

It belongs to the helicase family. UvrD subfamily.

The enzyme catalyses Couples ATP hydrolysis with the unwinding of duplex DNA by translocating in the 3'-5' direction.. The catalysed reaction is ATP + H2O = ADP + phosphate + H(+). Helicase IV catalyzes the unwinding of duplex DNA in the 3' to 5' direction with respect to the bound single strand in a reaction that is dependent upon the hydrolysis of ATP. The chain is DNA helicase IV (helD) from Escherichia coli (strain K12).